Here is a 672-residue protein sequence, read N- to C-terminus: Probable copper-transporting P-type ATPase B (672 aa).

A compositionally biased stretch (basic and acidic residues) spans 1 to 17 (MEHHSHQEHENHTSHGN). The tract at residues 1–22 (MEHHSHQEHENHTSHGNHEHHH) is disordered. A run of 6 helical transmembrane segments spans residues 30-50 (FFIS…MGVK), 55-75 (ISFT…FFYG), 93-113 (GMMT…LYAF), 125-145 (TMDF…GHWI), 282-302 (GYLF…WMLI), and 313-333 (LVTV…PLVT). D365 (4-aspartylphosphate intermediate) is an active-site residue. Mg(2+) is bound by residues D563 and D567. Helical transmembrane passes span 621-643 (LWWG…ASIG) and 647-669 (SPAV…AFTL).

The protein belongs to the cation transport ATPase (P-type) (TC 3.A.3) family. Type IB subfamily.

Its subcellular location is the cell membrane. The enzyme catalyses Cu(+)(in) + ATP + H2O = Cu(+)(out) + ADP + phosphate + H(+). Its function is as follows. Involved in copper transport. In Staphylococcus aureus, this protein is Probable copper-transporting P-type ATPase B (copB).